Reading from the N-terminus, the 90-residue chain is RNA-binding protein Hfq (90 aa).

Positions 9–68 (EPFLNTLRKEKVPVSIYLVNGIKLQGQIESFDQFVVLLRNNVNQMVYKHAISTIVPARRV) constitute a Sm domain.

It belongs to the Hfq family. In terms of assembly, homohexamer.

Functionally, RNA chaperone that binds small regulatory RNA (sRNAs) and mRNAs to facilitate mRNA translational regulation in response to envelope stress, environmental stress and changes in metabolite concentrations. Also binds with high specificity to tRNAs. This chain is RNA-binding protein Hfq, found in Halorhodospira halophila (strain DSM 244 / SL1) (Ectothiorhodospira halophila (strain DSM 244 / SL1)).